Consider the following 625-residue polypeptide: Probable potassium transport system protein Kup (625 aa).

Helical transmembrane passes span 13 to 33 (TALA…LYAL), 53 to 73 (ILSI…VAIV), 103 to 123 (IYMI…GIIT), 141 to 161 (VFDP…FLVQ), 172 to 192 (FGPI…HSVI), 206 to 226 (AIQF…AVVL), 250 to 270 (WFFV…ALLL), 282 to 302 (LLVP…ATVI), 340 to 360 (IYVP…ILIF), 369 to 389 (AYGL…AVFI), 400 to 420 (VLLL…ATSL), and 422 to 442 (ILSG…ILMT).

Belongs to the HAK/KUP transporter (TC 2.A.72) family.

The protein resides in the cell inner membrane. It carries out the reaction K(+)(in) + H(+)(in) = K(+)(out) + H(+)(out). Transport of potassium into the cell. Likely operates as a K(+):H(+) symporter. The sequence is that of Probable potassium transport system protein Kup from Acinetobacter baumannii (strain ACICU).